Consider the following 595-residue polypeptide: Aspartate--tRNA(Asp/Asn) ligase (595 aa).

E175 provides a ligand contact to L-aspartate. Residues 199-202 (QQYK) are aspartate. Residues R221 and H454 each contribute to the L-aspartate site. An ATP-binding site is contributed by 221 to 223 (RDE). E488 lines the ATP pocket. R495 serves as a coordination point for L-aspartate. Position 540 to 543 (540 to 543 (GIDR)) interacts with ATP.

The protein belongs to the class-II aminoacyl-tRNA synthetase family. Type 1 subfamily. In terms of assembly, homodimer.

Its subcellular location is the cytoplasm. The catalysed reaction is tRNA(Asx) + L-aspartate + ATP = L-aspartyl-tRNA(Asx) + AMP + diphosphate. In terms of biological role, aspartyl-tRNA synthetase with relaxed tRNA specificity since it is able to aspartylate not only its cognate tRNA(Asp) but also tRNA(Asn). Reaction proceeds in two steps: L-aspartate is first activated by ATP to form Asp-AMP and then transferred to the acceptor end of tRNA(Asp/Asn). In Rhizobium meliloti (strain 1021) (Ensifer meliloti), this protein is Aspartate--tRNA(Asp/Asn) ligase.